Reading from the N-terminus, the 224-residue chain is Deoxyribose-phosphate aldolase (224 aa).

The Proton donor/acceptor role is filled by aspartate 94. Lysine 156 serves as the catalytic Schiff-base intermediate with acetaldehyde. Lysine 184 (proton donor/acceptor) is an active-site residue.

It belongs to the DeoC/FbaB aldolase family. DeoC type 1 subfamily.

The protein localises to the cytoplasm. It carries out the reaction 2-deoxy-D-ribose 5-phosphate = D-glyceraldehyde 3-phosphate + acetaldehyde. Its pathway is carbohydrate degradation; 2-deoxy-D-ribose 1-phosphate degradation; D-glyceraldehyde 3-phosphate and acetaldehyde from 2-deoxy-alpha-D-ribose 1-phosphate: step 2/2. Functionally, catalyzes a reversible aldol reaction between acetaldehyde and D-glyceraldehyde 3-phosphate to generate 2-deoxy-D-ribose 5-phosphate. The polypeptide is Deoxyribose-phosphate aldolase (Methanocella arvoryzae (strain DSM 22066 / NBRC 105507 / MRE50)).